The primary structure comprises 368 residues: Chorismate synthase (368 aa).

NADP(+) is bound at residue Arg46. Residues Arg124 to Ser126, Gly284, Lys299 to Ser303, and Arg326 contribute to the FMN site.

The protein belongs to the chorismate synthase family. FMNH2 serves as cofactor.

It catalyses the reaction 5-O-(1-carboxyvinyl)-3-phosphoshikimate = chorismate + phosphate. It participates in metabolic intermediate biosynthesis; chorismate biosynthesis; chorismate from D-erythrose 4-phosphate and phosphoenolpyruvate: step 7/7. Its function is as follows. Catalyzes the anti-1,4-elimination of the C-3 phosphate and the C-6 proR hydrogen from 5-enolpyruvylshikimate-3-phosphate (EPSP) to yield chorismate, which is the branch point compound that serves as the starting substrate for the three terminal pathways of aromatic amino acid biosynthesis. This reaction introduces a second double bond into the aromatic ring system. In Pyrobaculum aerophilum (strain ATCC 51768 / DSM 7523 / JCM 9630 / CIP 104966 / NBRC 100827 / IM2), this protein is Chorismate synthase.